Here is a 110-residue protein sequence, read N- to C-terminus: Disintegrin jerdostatin (110 aa).

The N-terminal stretch at 1 to 20 (MIQVLLVTICLAVFPYQVSS) is a signal peptide. A propeptide spanning residues 21–67 (KTLKSGSVNEYEVVNPGTVTGLPKGAVKQPEKKHEPMKGNTLQKLPL) is cleaved from the precursor. A Disintegrin domain is found at 27-110 (SVNEYEVVNP…CECPSYPGNG (84 aa)). Intrachain disulfides connect Cys68–Cys77, Cys73–Cys96, Cys74–Cys101, and Cys86–Cys103. Positions 88-90 (RTS) match the Cell attachment site; atypical (RTS) motif.

The protein belongs to the disintegrin family. Short disintegrin subfamily. As to quaternary structure, monomer. Post-translationally, two conformers are found, they may differ by their disulfide bond connectivities. Conformer 2 is 33 times less active than conformer 1. Conformer 2 may represent a non-native protein. In terms of processing, the C-terminal dipeptide may be post-translationally removed, as seen in disintegrins that possess a KTS integrin-binding motif. As to expression, expressed by the venom gland.

It localises to the secreted. Functionally, recombinant protein inhibits the adhesion of alpha-1/beta-1-K562 (ITGA1/ITGB1) cells to collagen IV with an IC(50) of 80 nM. The polypeptide is Disintegrin jerdostatin (Protobothrops jerdonii (Jerdon's pitviper)).